The sequence spans 1106 residues: Carbamoyl phosphate synthase large chain (1106 aa).

The tract at residues 1-402 (MPRRQDLNSV…ALQKAMRSLE (402 aa)) is carboxyphosphate synthetic domain. ATP-binding residues include Arg-129, Arg-169, Gly-175, Gly-176, Glu-208, Ile-210, Glu-215, Gly-241, Val-242, His-243, Gln-285, and Glu-299. The 196-residue stretch at 133–328 (KGVVERCGAE…IAKIATKLSL (196 aa)) folds into the ATP-grasp 1 domain. The Mg(2+) site is built by Gln-285, Glu-299, and Asn-301. Positions 285, 299, and 301 each coordinate Mn(2+). The tract at residues 403-550 (QKGSAFSFAR…YHYSSYDRET (148 aa)) is oligomerization domain. A carbamoyl phosphate synthetic domain region spans residues 551-953 (EVAPHEKPSV…AFAKAQAAAG (403 aa)). An ATP-grasp 2 domain is found at 681–872 (ARVLTEAGLR…MAKAAALIGT (192 aa)). Positions 717, 756, 758, 763, 788, 789, 790, 791, 831, and 843 each coordinate ATP. 3 residues coordinate Mg(2+): Gln-831, Glu-843, and Asn-845. The Mn(2+) site is built by Gln-831, Glu-843, and Asn-845. The region spanning 954–1106 (GPLPTSGSLF…ERAAQEASRD (153 aa)) is the MGS-like domain. An allosteric domain region spans residues 954-1106 (GPLPTSGSLF…ERAAQEASRD (153 aa)).

The protein belongs to the CarB family. Composed of two chains; the small (or glutamine) chain promotes the hydrolysis of glutamine to ammonia, which is used by the large (or ammonia) chain to synthesize carbamoyl phosphate. Tetramer of heterodimers (alpha,beta)4. Mg(2+) is required as a cofactor. Requires Mn(2+) as cofactor.

It catalyses the reaction hydrogencarbonate + L-glutamine + 2 ATP + H2O = carbamoyl phosphate + L-glutamate + 2 ADP + phosphate + 2 H(+). It carries out the reaction hydrogencarbonate + NH4(+) + 2 ATP = carbamoyl phosphate + 2 ADP + phosphate + 2 H(+). It participates in amino-acid biosynthesis; L-arginine biosynthesis; carbamoyl phosphate from bicarbonate: step 1/1. It functions in the pathway pyrimidine metabolism; UMP biosynthesis via de novo pathway; (S)-dihydroorotate from bicarbonate: step 1/3. In terms of biological role, large subunit of the glutamine-dependent carbamoyl phosphate synthetase (CPSase). CPSase catalyzes the formation of carbamoyl phosphate from the ammonia moiety of glutamine, carbonate, and phosphate donated by ATP, constituting the first step of 2 biosynthetic pathways, one leading to arginine and/or urea and the other to pyrimidine nucleotides. The large subunit (synthetase) binds the substrates ammonia (free or transferred from glutamine from the small subunit), hydrogencarbonate and ATP and carries out an ATP-coupled ligase reaction, activating hydrogencarbonate by forming carboxy phosphate which reacts with ammonia to form carbamoyl phosphate. The sequence is that of Carbamoyl phosphate synthase large chain from Kocuria rhizophila (strain ATCC 9341 / DSM 348 / NBRC 103217 / DC2201).